The sequence spans 123 residues: Large ribosomal subunit protein bL12 (123 aa).

This sequence belongs to the bacterial ribosomal protein bL12 family. Homodimer. Part of the ribosomal stalk of the 50S ribosomal subunit. Forms a multimeric L10(L12)X complex, where L10 forms an elongated spine to which 2 to 4 L12 dimers bind in a sequential fashion. Binds GTP-bound translation factors.

Forms part of the ribosomal stalk which helps the ribosome interact with GTP-bound translation factors. Is thus essential for accurate translation. This is Large ribosomal subunit protein bL12 from Rhodopseudomonas palustris (strain BisB5).